A 280-amino-acid chain; its full sequence is Pantothenate synthetase (280 aa).

ATP is bound at residue 30 to 37 (MGYLHEGH). Histidine 37 acts as the Proton donor in catalysis. Glutamine 61 contributes to the (R)-pantoate binding site. Glutamine 61 contacts beta-alanine. Residue 147-150 (GQKD) participates in ATP binding. Glutamine 153 serves as a coordination point for (R)-pantoate. Residues valine 176 and 184–187 (MSSR) each bind ATP.

It belongs to the pantothenate synthetase family. As to quaternary structure, homodimer.

It localises to the cytoplasm. It carries out the reaction (R)-pantoate + beta-alanine + ATP = (R)-pantothenate + AMP + diphosphate + H(+). It participates in cofactor biosynthesis; (R)-pantothenate biosynthesis; (R)-pantothenate from (R)-pantoate and beta-alanine: step 1/1. Functionally, catalyzes the condensation of pantoate with beta-alanine in an ATP-dependent reaction via a pantoyl-adenylate intermediate. The chain is Pantothenate synthetase from Thermosipho melanesiensis (strain DSM 12029 / CIP 104789 / BI429).